A 100-amino-acid polypeptide reads, in one-letter code: Protein Tat (100 aa).

The tract at residues 1 to 20 (MEPVNPSLEPWKHPGSQPKT) is disordered. The segment at 1 to 24 (MEPVNPSLEPWKHPGSQPKTACTN) is interaction with human CREBBP. Residues 1–48 (MEPVNPSLEPWKHPGSQPKTACTNCYCKKCCFHCQACFITKGLGISYG) are transactivation. Zn(2+)-binding residues include cysteine 22, cysteine 25, and cysteine 27. The tract at residues 22–37 (CTNCYCKKCCFHCQAC) is cysteine-rich. N6-acetyllysine; by host PCAF is present on lysine 28. The Zn(2+) site is built by cysteine 30, histidine 33, cysteine 34, and cysteine 37. The tract at residues 38-48 (FITKGLGISYG) is core. Positions 47 to 100 (YGRKKRRQRRRPPQDSQTHQVSLSKPSSQPRGDPTGPKEQKKKVERETETDPVH) are disordered. The span at 48 to 57 (GRKKRRQRRR) shows a compositional bias: basic residues. The Nuclear localization signal, RNA-binding (TAR), and protein transduction signature appears at 49–57 (RKKRRQRRR). Positions 49 to 85 (RKKRRQRRRPPQDSQTHQVSLSKPSSQPRGDPTGPKE) are interaction with the host capping enzyme RNGTT. An N6-acetyllysine; by host EP300 and GCN5L2 mark is found at lysine 50 and lysine 51. Asymmetric dimethylarginine; by host PRMT6 is present on residues arginine 52 and arginine 53. The span at 61–76 (DSQTHQVSLSKPSSQP) shows a compositional bias: polar residues. A Glycyl lysine isopeptide (Lys-Gly) (interchain with G-Cter in ubiquitin) cross-link involves residue lysine 71. Positions 77-79 (RGD) match the Cell attachment site motif. A compositionally biased stretch (basic and acidic residues) spans 82–100 (GPKEQKKKVERETETDPVH).

This sequence belongs to the lentiviruses Tat family. In terms of assembly, interacts with host CCNT1. Associates with the P-TEFb complex composed at least of Tat, P-TEFb (CDK9 and CCNT1), TAR RNA, RNA Pol II. Recruits the HATs CREBBP, TAF1/TFIID, EP300, PCAF and GCN5L2. Interacts with host KAT5/Tip60; this interaction targets the latter to degradation. Interacts with the host deacetylase SIRT1. Interacts with host capping enzyme RNGTT; this interaction stimulates RNGTT. Binds to host KDR, and to the host integrins ITGAV/ITGB3 and ITGA5/ITGB1. Interacts with host KPNB1/importin beta-1 without previous binding to KPNA1/importin alpha-1. Interacts with EIF2AK2. Interacts with host nucleosome assembly protein NAP1L1; this interaction may be required for the transport of Tat within the nucleus, since the two proteins interact at the nuclear rim. Interacts with host C1QBP/SF2P32; this interaction involves lysine-acetylated Tat. Interacts with the host chemokine receptors CCR2, CCR3 and CXCR4. Interacts with host DPP4/CD26; this interaction may trigger an anti-proliferative effect. Interacts with host LDLR. Interacts with the host extracellular matrix metalloproteinase MMP1. Interacts with host PRMT6; this interaction mediates Tat's methylation. Interacts with, and is ubiquitinated by MDM2/Hdm2. Interacts with host PSMC3 and HTATIP2. Interacts with STAB1; this interaction may overcome SATB1-mediated repression of IL2 and IL2RA (interleukin) in T cells by binding to the same domain than HDAC1. Interacts (when acetylated) with human CDK13, thereby increasing HIV-1 mRNA splicing and promoting the production of the doubly spliced HIV-1 protein Nef. Interacts with host TBP; this interaction modulates the activity of transcriptional pre-initiation complex. Interacts with host RELA. Interacts with host PLSCR1; this interaction negatively regulates Tat transactivation activity by altering its subcellular distribution. In terms of processing, asymmetrical arginine methylation by host PRMT6 seems to diminish the transactivation capacity of Tat and affects the interaction with host CCNT1. Post-translationally, acetylation by EP300, CREBBP, GCN5L2/GCN5 and PCAF regulates the transactivation activity of Tat. EP300-mediated acetylation of Lys-50 promotes dissociation of Tat from the TAR RNA through the competitive binding to PCAF's bromodomain. In addition, the non-acetylated Tat's N-terminus can also interact with PCAF. PCAF-mediated acetylation of Lys-28 enhances Tat's binding to CCNT1. Lys-50 is deacetylated by SIRT1. Polyubiquitination by host MDM2 does not target Tat to degradation, but activates its transactivation function and fosters interaction with CCNT1 and TAR RNA. In terms of processing, phosphorylated by EIF2AK2 on serine and threonine residues adjacent to the basic region important for TAR RNA binding and function. Phosphorylation of Tat by EIF2AK2 is dependent on the prior activation of EIF2AK2 by dsRNA.

Its subcellular location is the host nucleus. It is found in the host nucleolus. It localises to the host cytoplasm. The protein localises to the secreted. Functionally, transcriptional activator that increases RNA Pol II processivity, thereby increasing the level of full-length viral transcripts. Recognizes a hairpin structure at the 5'-LTR of the nascent viral mRNAs referred to as the transactivation responsive RNA element (TAR) and recruits the cyclin T1-CDK9 complex (P-TEFb complex) that will in turn hyperphosphorylate the RNA polymerase II to allow efficient elongation. The CDK9 component of P-TEFb and other Tat-activated kinases hyperphosphorylate the C-terminus of RNA Pol II that becomes stabilized and much more processive. Other factors such as HTATSF1/Tat-SF1, SUPT5H/SPT5, and HTATIP2 are also important for Tat's function. Besides its effect on RNA Pol II processivity, Tat induces chromatin remodeling of proviral genes by recruiting the histone acetyltransferases (HATs) CREBBP, EP300 and PCAF to the chromatin. This also contributes to the increase in proviral transcription rate, especially when the provirus integrates in transcriptionally silent region of the host genome. To ensure maximal activation of the LTR, Tat mediates nuclear translocation of NF-kappa-B by interacting with host RELA. Through its interaction with host TBP, Tat may also modulate transcription initiation. Tat can reactivate a latently infected cell by penetrating in it and transactivating its LTR promoter. In the cytoplasm, Tat is thought to act as a translational activator of HIV-1 mRNAs. Its function is as follows. Extracellular circulating Tat can be endocytosed by surrounding uninfected cells via the binding to several surface receptors such as CD26, CXCR4, heparan sulfate proteoglycans (HSPG) or LDLR. Neurons are rarely infected, but they internalize Tat via their LDLR. Through its interaction with nuclear HATs, Tat is potentially able to control the acetylation-dependent cellular gene expression. Modulates the expression of many cellular genes involved in cell survival, proliferation or in coding for cytokines or cytokine receptors. Tat plays a role in T-cell and neurons apoptosis. Tat induced neurotoxicity and apoptosis probably contribute to neuroAIDS. Circulating Tat also acts as a chemokine-like and/or growth factor-like molecule that binds to specific receptors on the surface of the cells, affecting many cellular pathways. In the vascular system, Tat binds to ITGAV/ITGB3 and ITGA5/ITGB1 integrins dimers at the surface of endothelial cells and competes with bFGF for heparin-binding sites, leading to an excess of soluble bFGF. This is Protein Tat from Homo sapiens (Human).